A 255-amino-acid polypeptide reads, in one-letter code: 3-oxoacyl-[acyl-carrier-protein] reductase MabA (255 aa).

NADP(+)-binding positions include 32–35, R55, 69–70, G98, Y161, K165, I194, and R205; these read NRGI and DV. The active-site Proton acceptor is Y161.

The protein belongs to the short-chain dehydrogenases/reductases (SDR) family. As to quaternary structure, homotetramer.

The protein resides in the secreted. It localises to the cell wall. It catalyses the reaction a (3R)-hydroxyacyl-[ACP] + NADP(+) = a 3-oxoacyl-[ACP] + NADPH + H(+). The enzyme catalyses a (3R)-3-hydroxyacyl-CoA + NADP(+) = a 3-oxoacyl-CoA + NADPH + H(+). It carries out the reaction (3R)-3-hydroxybutanoyl-CoA + NADP(+) = acetoacetyl-CoA + NADPH + H(+). The catalysed reaction is (3R)-hydroxyoctanoyl-CoA + NADP(+) = 3-oxooctanoyl-CoA + NADPH + H(+). The protein operates within lipid metabolism; mycolic acid biosynthesis. Functionally, part of the mycobacterial fatty acid elongation system FAS-II, which is involved in mycolic acid biosynthesis. Catalyzes the NADPH-dependent reduction of beta-ketoacyl derivatives, the second step of the FAS-II elongation cycle. Has a preference for longer substrates. Can use CoA derivatives as substrates in vitro. The chain is 3-oxoacyl-[acyl-carrier-protein] reductase MabA from Mycolicibacterium smegmatis (strain ATCC 700084 / mc(2)155) (Mycobacterium smegmatis).